A 544-amino-acid chain; its full sequence is Glutamyl-tRNA(Gln) amidotransferase subunit B, chloroplastic/mitochondrial (544 aa).

The protein belongs to the GatB/GatE family. GatB subfamily. In terms of assembly, subunit of the heterotrimeric GatCAB amidotransferase (AdT) complex, composed of A, B and C subunits.

It is found in the mitochondrion. The protein localises to the plastid. It localises to the chloroplast. The catalysed reaction is L-glutamyl-tRNA(Gln) + L-glutamine + ATP + H2O = L-glutaminyl-tRNA(Gln) + L-glutamate + ADP + phosphate + H(+). Its function is as follows. Allows the formation of correctly charged Gln-tRNA(Gln) through the transamidation of misacylated Glu-tRNA(Gln) in chloroplasts and mitochondria. The reaction takes place in the presence of glutamine and ATP through an activated gamma-phospho-Glu-tRNA(Gln). This chain is Glutamyl-tRNA(Gln) amidotransferase subunit B, chloroplastic/mitochondrial, found in Oryza sativa subsp. japonica (Rice).